Here is a 268-residue protein sequence, read N- to C-terminus: Putative esterase/lipase 2 (268 aa).

H29 is a catalytic residue. The active-site Charge relay system is the S98.

It belongs to the lipase/esterase LIP3/BchO family.

The chain is Putative esterase/lipase 2 from Mycoplasma genitalium (strain ATCC 33530 / DSM 19775 / NCTC 10195 / G37) (Mycoplasmoides genitalium).